Consider the following 366-residue polypeptide: 2-aminoethylphosphonate--pyruvate transaminase (366 aa).

An N6-(pyridoxal phosphate)lysine modification is found at Lys-194.

This sequence belongs to the class-V pyridoxal-phosphate-dependent aminotransferase family. PhnW subfamily. In terms of assembly, homodimer. Pyridoxal 5'-phosphate is required as a cofactor.

It carries out the reaction (2-aminoethyl)phosphonate + pyruvate = phosphonoacetaldehyde + L-alanine. In terms of biological role, involved in phosphonate degradation. This Lactiplantibacillus plantarum (strain ATCC BAA-793 / NCIMB 8826 / WCFS1) (Lactobacillus plantarum) protein is 2-aminoethylphosphonate--pyruvate transaminase.